Here is a 229-residue protein sequence, read N- to C-terminus: Endonuclease V (229 aa).

Mg(2+)-binding residues include Asp-43 and Asp-111.

It belongs to the endonuclease V family. Mg(2+) is required as a cofactor.

Its subcellular location is the cytoplasm. It carries out the reaction Endonucleolytic cleavage at apurinic or apyrimidinic sites to products with a 5'-phosphate.. Its function is as follows. DNA repair enzyme involved in the repair of deaminated bases. Selectively cleaves double-stranded DNA at the second phosphodiester bond 3' to a deoxyinosine leaving behind the intact lesion on the nicked DNA. In Rippkaea orientalis (strain PCC 8801 / RF-1) (Cyanothece sp. (strain PCC 8801)), this protein is Endonuclease V.